A 222-amino-acid polypeptide reads, in one-letter code: Eukaryotic translation initiation factor 3 subunit K (222 aa).

Positions 46–208 (YDLEANLAVL…KIKTKNITEK (163 aa)) constitute a PCI domain.

This sequence belongs to the eIF-3 subunit K family. Component of the eukaryotic translation initiation factor 3 (eIF-3) complex. The eIF-3 complex interacts with pix.

It localises to the cytoplasm. Functionally, component of the eukaryotic translation initiation factor 3 (eIF-3) complex, which is involved in protein synthesis of a specialized repertoire of mRNAs and, together with other initiation factors, stimulates binding of mRNA and methionyl-tRNAi to the 40S ribosome. The eIF-3 complex specifically targets and initiates translation of a subset of mRNAs involved in cell proliferation. This is Eukaryotic translation initiation factor 3 subunit K from Drosophila erecta (Fruit fly).